The chain runs to 688 residues: Hid-1 family protein P19A11.07c (688 aa).

This sequence belongs to the hid-1 family.

It is found in the cytoplasm. The protein resides in the nucleus. This chain is Hid-1 family protein P19A11.07c, found in Schizosaccharomyces pombe (strain 972 / ATCC 24843) (Fission yeast).